Consider the following 930-residue polypeptide: Carnosine synthase 1 (930 aa).

The interval 1–24 (MISVDRLSEEQALGMKEQEWAGPE) is disordered. Residues 624–825 (RPPPAAFSVP…LLLAAVLLAL (202 aa)) enclose the ATP-grasp domain. Residue 650–716 (VPFPAVAKLE…MEYVPGTEHD (67 aa)) participates in ATP binding. Positions 782, 794, and 796 each coordinate Mg(2+). Glu-782, Glu-794, and Asn-796 together coordinate Mn(2+).

As to quaternary structure, homotetramer. It depends on Mg(2+) as a cofactor. Mn(2+) serves as cofactor.

It carries out the reaction beta-alanine + L-histidine + ATP = carnosine + ADP + phosphate + H(+). The catalysed reaction is 4-aminobutanoate + L-histidine + ATP = L-homocarnosine + ADP + phosphate + H(+). Its function is as follows. Catalyzes the synthesis of carnosine and homocarnosine. Carnosine is synthesized more efficiently than homocarnosine. The sequence is that of Carnosine synthase 1 from Gallus gallus (Chicken).